Reading from the N-terminus, the 190-residue chain is Holliday junction branch migration complex subunit RuvA (190 aa).

Positions 1–65 (MIGNLSGIVD…ENVAQLYGFI (65 aa)) are domain I. The interval 66–143 (SKEEQQCLRL…KLEINNNNFH (78 aa)) is domain II. Residues 144-147 (PINE) form a flexible linker region. The segment at 147 to 190 (EDALSALINLGYEKMKAYDTIKKYRPNLDTKDIIRMALKELSIL) is domain III.

The protein belongs to the RuvA family. Homotetramer. Forms an RuvA(8)-RuvB(12)-Holliday junction (HJ) complex. HJ DNA is sandwiched between 2 RuvA tetramers; dsDNA enters through RuvA and exits via RuvB. An RuvB hexamer assembles on each DNA strand where it exits the tetramer. Each RuvB hexamer is contacted by two RuvA subunits (via domain III) on 2 adjacent RuvB subunits; this complex drives branch migration. In the full resolvosome a probable DNA-RuvA(4)-RuvB(12)-RuvC(2) complex forms which resolves the HJ.

Its subcellular location is the cytoplasm. In terms of biological role, the RuvA-RuvB-RuvC complex processes Holliday junction (HJ) DNA during genetic recombination and DNA repair, while the RuvA-RuvB complex plays an important role in the rescue of blocked DNA replication forks via replication fork reversal (RFR). RuvA specifically binds to HJ cruciform DNA, conferring on it an open structure. The RuvB hexamer acts as an ATP-dependent pump, pulling dsDNA into and through the RuvAB complex. HJ branch migration allows RuvC to scan DNA until it finds its consensus sequence, where it cleaves and resolves the cruciform DNA. This Wolbachia pipientis wMel protein is Holliday junction branch migration complex subunit RuvA.